The primary structure comprises 65 residues: U15-hexatoxin-Mg1b (65 aa).

Post-translationally, contains 4 disulfide bonds. As to expression, expressed by the venom gland.

The protein resides in the secreted. In vivo, intrathorax injection into crickets causes death. In Macrothele gigas (Japanese funnel web spider), this protein is U15-hexatoxin-Mg1b.